Reading from the N-terminus, the 512-residue chain is Maturase K (512 aa).

Belongs to the intron maturase 2 family. MatK subfamily.

The protein localises to the plastid. Its subcellular location is the chloroplast. In terms of biological role, usually encoded in the trnK tRNA gene intron. Probably assists in splicing its own and other chloroplast group II introns. The chain is Maturase K from Amorphophallus abyssinicus (Black arum).